A 239-amino-acid polypeptide reads, in one-letter code: MPHLAYPTTTCEGFRCETHCAVRGLAICGELGPADHEEFERLAQHVRYGPKEALFSEDEVADSVYSLIEGIARLYKLLPDGRRQIIGFALPGDFLGMAPGNRYSFSADSIGGVTVCKFFRGPFLRFIENRPQMLLRMNDFATRELSLAQDQMLLLGRRSAEEKVAAFLVGWRDRLARLEGVTKTVSLPMGRQDIADFLGLTIETVSRTFTKLEREKLIVIVPDGVRVLDPKRFDALAAA.

27–149 (ICGELGPADH…FATRELSLAQ (123 aa)) is a binding site for a nucleoside 3',5'-cyclic phosphate. The region spanning 158-231 (RSAEEKVAAF…PDGVRVLDPK (74 aa)) is the HTH crp-type domain. The segment at residues 191-210 (RQDIADFLGLTIETVSRTFT) is a DNA-binding region (H-T-H motif).

In terms of biological role, transcriptional activator of anaerobic gene expression. For aromatic acid degradation. Also required for the anaerobic degradation of benzoate. This Rhodopseudomonas palustris (strain ATCC BAA-98 / CGA009) protein is Transcriptional activatory protein AadR (aadR).